The chain runs to 166 residues: CDP-archaeol synthase (166 aa).

4 consecutive transmembrane segments (helical) span residues 39–59 (IRGFVGGVTAGILIGAVQMYA), 61–81 (ISGLVPWFPPHTLTAVILLAI), 104–124 (EWFLVDQLDFVVGALLLTLLF), and 127–147 (IWMLNTMTIPLLIVILVLTPL).

The protein belongs to the CDP-archaeol synthase family. Mg(2+) is required as a cofactor.

It localises to the cell membrane. The enzyme catalyses 2,3-bis-O-(geranylgeranyl)-sn-glycerol 1-phosphate + CTP + H(+) = CDP-2,3-bis-O-(geranylgeranyl)-sn-glycerol + diphosphate. The protein operates within membrane lipid metabolism; glycerophospholipid metabolism. Catalyzes the formation of CDP-2,3-bis-(O-geranylgeranyl)-sn-glycerol (CDP-archaeol) from 2,3-bis-(O-geranylgeranyl)-sn-glycerol 1-phosphate (DGGGP) and CTP. This reaction is the third ether-bond-formation step in the biosynthesis of archaeal membrane lipids. The sequence is that of CDP-archaeol synthase from Methanospirillum hungatei JF-1 (strain ATCC 27890 / DSM 864 / NBRC 100397 / JF-1).